A 953-amino-acid chain; its full sequence is Pyruvate, phosphate dikinase, chloroplastic (953 aa).

A chloroplast-targeting transit peptide spans 1–77 (MMSSLSVEGM…VLNPVSPPVT (77 aa)). The disordered stretch occupies residues 55–74 (PELRSSGLTPPRAVLNPVSP). Threonine 533 carries the post-translational modification Phosphothreonine; by PDRP1. The Tele-phosphohistidine intermediate role is filled by histidine 535. Arginine 641, arginine 698, glutamate 827, glycine 848, threonine 849, asparagine 850, and aspartate 851 together coordinate substrate. Glutamate 827 serves as a coordination point for Mg(2+). Residue aspartate 851 coordinates Mg(2+). The active-site Proton donor is cysteine 913.

This sequence belongs to the PEP-utilizing enzyme family. Homotetramer. Requires Mg(2+) as cofactor. Phosphorylation of Thr-533 in the dark inactivates the enzyme. Dephosphorylation upon light stimulation reactivates the enzyme.

Its subcellular location is the plastid. The protein localises to the chloroplast. It carries out the reaction pyruvate + phosphate + ATP = phosphoenolpyruvate + AMP + diphosphate + H(+). The protein operates within photosynthesis; C4 acid pathway. With respect to regulation, activated by light-induced dephosphorylation. Inhibited by dark-induced phosphorylation. Both reactions are catalyzed by PDRP1. Inactivated by cold due to the dissociation of the homotetramer. Functionally, formation of phosphoenolpyruvate, which is the primary acceptor of CO(2) in C4 and some Crassulacean acid metabolism plants. The polypeptide is Pyruvate, phosphate dikinase, chloroplastic (Flaveria bidentis (Coastal plain yellowtops)).